A 75-amino-acid polypeptide reads, in one-letter code: Notewaprin-b (75 aa).

The first 24 residues, 1 to 24 (MSSGGLLLLLGLLTLWAELTPVSS), serve as a signal peptide directing secretion. Residues 27 to 72 (RPKKPGLCPPRPQKPPCVRECKNDWICPGEQKCCRYGCIYECRDPI) enclose the WAP domain. Intrachain disulfides connect C34/C60, C43/C64, C47/C59, and C53/C68.

It belongs to the venom waprin family. As to expression, expressed by the venom gland.

The protein resides in the secreted. In terms of biological role, damages membranes of susceptible bacteria. Has no hemolytic activity. Not toxic to mice. Does not inhibit the proteinases elastase and cathepsin G. This Notechis scutatus scutatus (Mainland tiger snake) protein is Notewaprin-b.